The sequence spans 369 residues: Protein DUF642 L-GALACTONO-1,4-LACTONE-RESPONSIVE GENE 2 (369 aa).

The N-terminal stretch at 1–19 (MEGVTVVSFFLLFIATAMA) is a signal peptide. N-linked (GlcNAc...) asparagine glycosylation is present at asparagine 125.

In terms of tissue distribution, expressed in roots, seedlings and leaves.

The protein localises to the secreted. It is found in the cell wall. Functionally, involved in the regulation of testa rupture during seed germination. Required during roots and rosettes development. In Arabidopsis thaliana (Mouse-ear cress), this protein is Protein DUF642 L-GALACTONO-1,4-LACTONE-RESPONSIVE GENE 2.